A 2097-amino-acid polypeptide reads, in one-letter code: 1-phosphatidylinositol 3-phosphate 5-kinase (2097 aa).

The tract at residues Met-1–Ser-44 is disordered. Ala-2 carries the post-translational modification N-acetylalanine. Residues Ser-23 and Ser-48 each carry the phosphoserine; by autocatalysis modification. Positions Asn-56–Pro-122 are disordered. A compositionally biased stretch (low complexity) spans Glu-66–Ser-81. At Ser-88 the chain carries Phosphoserine. An FYVE-type zinc finger spans residues Asp-158–Leu-218. Cys-164, Cys-167, Cys-180, Cys-183, Cys-188, Cys-191, Cys-210, and Cys-213 together coordinate Zn(2+). A phosphoserine mark is found at Ser-299, Ser-307, and Ser-312. Residue Ser-318 is modified to Phosphoserine; by PKB/AKT1 or PKB/AKT2. Ser-329 is modified (phosphoserine). One can recognise a DEP domain in the interval His-365–Gln-440. A compositionally biased stretch (polar residues) spans Thr-442 to Glu-459. Residues Thr-442 to Asp-469 form a disordered region. Residues Gly-460–Asp-469 show a composition bias toward basic and acidic residues. Ser-475 carries the phosphoserine modification. Positions Gly-484 to Ser-505 are disordered. A compositionally biased stretch (polar residues) spans Leu-488 to Ser-505. Residues Met-616–Leu-868 are chaperonin-like domain. Disordered regions lie at residues Gly-895–Thr-928, Ala-989–Thr-1022, His-1171–Gly-1194, and Phe-1511–Glu-1555. The span at Ser-902 to Pro-912 shows a compositional bias: polar residues. Residues Ala-1175–Gly-1184 show a composition bias toward polar residues. Residues Asn-1185–Gly-1194 show a composition bias toward basic and acidic residues. A phosphoserine mark is found at Ser-1543 and Ser-1548. Position 1668 is a phosphoserine; by autocatalysis (Ser-1668). The segment at Glu-1697 to Met-1742 is disordered. Ser-1753 is subject to Phosphoserine. Positions Ser-1757 to Phe-2083 constitute a PIPK domain. Residues Gly-1781–Lys-1800 form a disordered region. A catalytic region spans residues Glu-1841–Cys-2097. Phosphoserine; by autocatalysis is present on residues Ser-1968 and Ser-2052.

In terms of assembly, component of the PI(3,5)P2 regulatory complex/PAS complex, at least composed of PIKFYVE, FIG4 and VAC14. VAC14 nucleates the assembly of the complex and serves as a scaffold by pentamerizing into a star-shaped structure, which can bind a single copy each of PIKFYVE and FIG4 and coordinates their activities. Interacts (via chaperonin-like domain) with RABEPK; the interaction recruits RABEPK to the endosomal membrane. Interacts with SPAG9. Interacts with EGFR. It depends on Mn(2+) as a cofactor. Post-translationally, phosphorylated in response to insulin at Ser-318 in a protein kinase B (PKB)-dependent manner. Autophosphorylates which down-regulates lipid product formation. Autophosphorylates which inhibits its own phosphatidylinositol 3-phosphate 5-kinase activity, stimulates FIG4 lipid phosphatase activity and down-regulates lipid product formation. Dephosphorylated by FIG4 in the PI(3,5)P2 regulatory complex, at Ser-48, Ser-1668 and Ser-2052. Phosphorylated in response to insulin at Ser-318 in a protein kinase B (PKB)-dependent manner. Ubiquitous.

The protein resides in the endosome membrane. Its subcellular location is the early endosome membrane. It localises to the cytoplasmic vesicle. It is found in the phagosome membrane. The protein localises to the late endosome membrane. It carries out the reaction a 1,2-diacyl-sn-glycero-3-phospho-(1D-myo-inositol-3-phosphate) + ATP = a 1,2-diacyl-sn-glycero-3-phospho-(1D-myo-inositol-3,5-bisphosphate) + ADP + H(+). It catalyses the reaction a 1,2-diacyl-sn-glycero-3-phospho-(1D-myo-inositol) + ATP = a 1,2-diacyl-sn-glycero-3-phospho-(1D-myo-inositol-5-phosphate) + ADP + H(+). The enzyme catalyses L-seryl-[protein] + ATP = O-phospho-L-seryl-[protein] + ADP + H(+). Inhibited by apilimod and YM201636. Dual specificity kinase implicated in myriad essential cellular processes such as maintenance of endomembrane homeostasis, and endocytic-vacuolar pathway, lysosomal trafficking, nuclear transport, stress- or hormone-induced signaling and cell cycle progression. The PI(3,5)P2 regulatory complex regulates both the synthesis and turnover of phosphatidylinositol 3,5-bisphosphate (PtdIns(3,5)P2). Sole enzyme to catalyze the phosphorylation of phosphatidylinositol 3-phosphate on the fifth hydroxyl of the myo-inositol ring, to form (PtdIns(3,5)P2). Also catalyzes the phosphorylation of phosphatidylinositol on the fifth hydroxyl of the myo-inositol ring, to form phosphatidylinositol 5-phosphate (PtdIns(5)P). Has serine-protein kinase activity and is able to autophosphorylate and transphosphorylate. Autophosphorylation inhibits its own phosphatidylinositol 3-phosphate 5-kinase activity, stimulates FIG4 lipid phosphatase activity and down-regulates lipid product formation. Involved in key endosome operations such as fission and fusion in the course of endosomal cargo transport. Required for the maturation of early into late endosomes, phagosomes and lysosomes. Regulates vacuole maturation and nutrient recovery following engulfment of macromolecules, initiates the redistribution of accumulated lysosomal contents back into the endosome network. Critical regulator of the morphology, degradative activity, and protein turnover of the endolysosomal system in macrophages and platelets. In neutrophils, critical to perform chemotaxis, generate ROS, and undertake phagosome fusion with lysosomes. Plays a key role in the processing and presentation of antigens by major histocompatibility complex class II (MHC class II) mediated by CTSS. Regulates melanosome biogenesis by controlling the delivery of proteins from the endosomal compartment to the melanosome. Essential for systemic glucose homeostasis, mediates insulin-induced signals for endosome/actin remodeling in the course of GLUT4 translocation/glucose uptake activation. Supports microtubule-based endosome-to-trans-Golgi network cargo transport, trhough association with SPAG9 and RABEPK. Mediates EGFR trafficking to the nucleus. The sequence is that of 1-phosphatidylinositol 3-phosphate 5-kinase from Mus musculus (Mouse).